The chain runs to 466 residues: Coagulation factor VII (466 aa).

The first 20 residues, methionine 1–alanine 20, serve as a signal peptide directing secretion. A propeptide spanning residues alanine 21 to arginine 60 is cleaved from the precursor. Residues alanine 61–serine 105 form the Gla domain. 4-carboxyglutamate occurs at positions 66, 67, 74, 76, 79, 80, 85, 86, 89, and 95. Cysteines 77 and 82 form a disulfide. Positions aspartate 106–glutamate 142 constitute an EGF-like 1; calcium-binding domain. Disulfide bonds link cysteine 110–cysteine 121, cysteine 115–cysteine 130, cysteine 132–cysteine 141, cysteine 151–cysteine 162, cysteine 158–cysteine 172, cysteine 174–cysteine 187, cysteine 195–cysteine 322, cysteine 219–cysteine 224, cysteine 238–cysteine 254, and cysteine 370–cysteine 389. Serine 112 is a glycosylation site (O-linked (Glc...) serine; alternate). Serine 112 is a glycosylation site (O-linked (Xyl...) serine; alternate). Residue serine 120 is glycosylated (O-linked (Fuc) serine). Aspartate 123 bears the (3R)-3-hydroxyaspartate mark. Residues aspartate 147–threonine 188 form the EGF-like 2 domain. The N-linked (GlcNAc...) asparagine glycan is linked to asparagine 205. Positions isoleucine 213–arginine 452 constitute a Peptidase S1 domain. Active-site charge relay system residues include histidine 253 and aspartate 302. Residue asparagine 382 is glycosylated (N-linked (GlcNAc...) asparagine). Aspartate 398 is a substrate binding site. The cysteines at positions 400 and 428 are disulfide-linked. Residue serine 404 is the Charge relay system of the active site.

The protein belongs to the peptidase S1 family. As to quaternary structure, heterodimer of a light chain and a heavy chain linked by a disulfide bond. Post-translationally, the vitamin K-dependent, enzymatic carboxylation of some glutamate residues allows the modified protein to bind calcium. In terms of processing, the iron and 2-oxoglutarate dependent 3-hydroxylation of aspartate and asparagine is (R) stereospecific within EGF domains. O-glycosylated. O-fucosylated by POFUT1 on a conserved serine or threonine residue found in the consensus sequence C2-X(4,5)-[S/T]-C3 of EGF domains, where C2 and C3 are the second and third conserved cysteines. Post-translationally, can be either O-glucosylated or O-xylosylated at Ser-112 by POGLUT1.

It is found in the secreted. It catalyses the reaction Selective cleavage of Arg-|-Ile bond in factor X to form factor Xa.. Initiates the extrinsic pathway of blood coagulation. Serine protease that circulates in the blood in a zymogen form. Factor VII is converted to factor VIIa by factor Xa, factor XIIa, factor IXa, or thrombin by minor proteolysis. In the presence of tissue factor and calcium ions, factor VIIa then converts factor X to factor Xa by limited proteolysis. Factor VIIa also converts factor IX to factor IXa in the presence of tissue factor and calcium. This chain is Coagulation factor VII (F7), found in Pan paniscus (Pygmy chimpanzee).